The primary structure comprises 389 residues: MVSVAEIRKAQRAEGPATILAIGTANPANKVEQATYPDFYFKITNSEHKTELKEKFQRMCDKSMIKSRYMYLTEEILKENPSLCEYMAPSLDARQDMVVVEVPRLGKEAAVKAIKEWGQPKSKITHLIFCTTSGVDMPGADYQLTKLLGLRPYVKRYMMYQQGCFAGGTVLRLAKDLAENNKGARVLVVCSEVTAVTFRGPSDTHLDSLVGQALFGDGAAALIVGSDPVPEIEKPIFEMVWTAQTIAPDSEGAIDGHLREAGLTFHLLKDVPGIVSKNIDKALVEAFQPLNISDYNSIFWIAHPGGPAILDQVEQKLALKPEKMKATRDVLSEYGNMSSACVLFILDEMRKKSAQNGLKTTGEGLDWGVLFGFGPGLTIETVVLHSVAI.

The active site involves Cys164.

It belongs to the thiolase-like superfamily. Chalcone/stilbene synthases family.

It catalyses the reaction (E)-4-coumaroyl-CoA + 3 malonyl-CoA + 3 H(+) = 2',4,4',6'-tetrahydroxychalcone + 3 CO2 + 4 CoA. It functions in the pathway secondary metabolite biosynthesis; flavonoid biosynthesis. The primary product of this enzyme is 4,2',4',6'-tetrahydroxychalcone (also termed naringenin-chalcone or chalcone) which can under specific conditions spontaneously isomerize into naringenin. The protein is Chalcone synthase 6 (CHS6) of Trifolium subterraneum (Subterranean clover).